The primary structure comprises 287 residues: Nematocyst expressed protein 6 (287 aa).

Positions 1 to 20 (MKGFIFAGVLVSALICLAEG) are cleaved as a signal peptide. The region spanning 53–249 (RAALRDRYLW…RQTNLMYKCN (197 aa)) is the Peptidase M12A domain. 2 cysteine pairs are disulfide-bonded: Cys-95-Cys-248 and Cys-116-Cys-139. His-146 lines the Zn(2+) pocket. Glu-147 is a catalytic residue. Zn(2+) is bound by residues His-150 and His-156. The interval 249 to 287 (NAQGDSELQPVNDEDEDKDGGDSKKKPDPKGPKPGEIEE) is disordered. Basic and acidic residues predominate over residues 268 to 287 (GGDSKKKPDPKGPKPGEIEE).

It depends on Zn(2+) as a cofactor. Nematocyte and pharyngeal gland.

It localises to the secreted. The protein localises to the nematocyst. Functionally, metalloprotease. The polypeptide is Nematocyst expressed protein 6 (Nematostella vectensis (Starlet sea anemone)).